The sequence spans 200 residues: Probable molybdenum cofactor guanylyltransferase (200 aa).

GTP-binding positions include 9 to 11 (LAG), Lys21, Asp69, and Asp100. Asp100 serves as a coordination point for Mg(2+).

The protein belongs to the MobA family. Requires Mg(2+) as cofactor.

It is found in the cytoplasm. It catalyses the reaction Mo-molybdopterin + GTP + H(+) = Mo-molybdopterin guanine dinucleotide + diphosphate. Functionally, transfers a GMP moiety from GTP to Mo-molybdopterin (Mo-MPT) cofactor (Moco or molybdenum cofactor) to form Mo-molybdopterin guanine dinucleotide (Mo-MGD) cofactor. The sequence is that of Probable molybdenum cofactor guanylyltransferase from Bacillus cereus (strain ZK / E33L).